Here is a 569-residue protein sequence, read N- to C-terminus: Phenylalanine ammonia-lyase (569 aa).

Tyr-78 (proton donor/acceptor) is an active-site residue. A cross-link (5-imidazolinone (Ala-Gly)) is located at residues 167 to 169; sequence ASG. At Ser-168 the chain carries 2,3-didehydroalanine (Ser). Residues Asn-223, Gln-311, Arg-317, Asn-347, Lys-419, Glu-448, and Asn-451 each coordinate (E)-cinnamate.

This sequence belongs to the PAL/histidase family. As to quaternary structure, homotetramer. In terms of processing, contains an active site 4-methylidene-imidazol-5-one (MIO), which is formed autocatalytically by cyclization and dehydration of residues Ala-Ser-Gly.

The protein resides in the cytoplasm. It catalyses the reaction L-phenylalanine = (E)-cinnamate + NH4(+). It participates in phenylpropanoid metabolism; trans-cinnamate biosynthesis; trans-cinnamate from L-phenylalanine: step 1/1. In terms of biological role, catalyzes the non-oxidative deamination of L-phenylalanine to form trans-cinnamic acid, the first step in the phenylpropanoid pathway. The protein is Phenylalanine ammonia-lyase of Nostoc punctiforme (strain ATCC 29133 / PCC 73102).